The sequence spans 250 residues: tRNA (guanine-N(1)-)-methyltransferase (250 aa).

Residues Gly-116 and 136–141 (IGDYVL) each bind S-adenosyl-L-methionine.

It belongs to the RNA methyltransferase TrmD family. As to quaternary structure, homodimer.

It is found in the cytoplasm. It carries out the reaction guanosine(37) in tRNA + S-adenosyl-L-methionine = N(1)-methylguanosine(37) in tRNA + S-adenosyl-L-homocysteine + H(+). Specifically methylates guanosine-37 in various tRNAs. The polypeptide is tRNA (guanine-N(1)-)-methyltransferase (Pseudomonas fluorescens (strain ATCC BAA-477 / NRRL B-23932 / Pf-5)).